Consider the following 172-residue polypeptide: Adenine phosphoribosyltransferase (172 aa).

This sequence belongs to the purine/pyrimidine phosphoribosyltransferase family. Homodimer.

It localises to the cytoplasm. The catalysed reaction is AMP + diphosphate = 5-phospho-alpha-D-ribose 1-diphosphate + adenine. Its pathway is purine metabolism; AMP biosynthesis via salvage pathway; AMP from adenine: step 1/1. Its function is as follows. Catalyzes a salvage reaction resulting in the formation of AMP, that is energically less costly than de novo synthesis. The protein is Adenine phosphoribosyltransferase of Clostridium botulinum (strain Loch Maree / Type A3).